A 783-amino-acid chain; its full sequence is ATP-dependent 6-phosphofructokinase (783 aa).

Positions 1–10 are enriched in pro residues; sequence MAPPQAPVQP. The disordered stretch occupies residues 1–20; it reads MAPPQAPVQPPKRRRIGVLT. Residues 1-389 are N-terminal catalytic PFK domain 1; it reads MAPPQAPVQP…YHFSYINTST (389 aa). ATP contacts are provided by residues Gly-23, 86 to 87, and 116 to 119; these read RC and GDGS. Asp-117 contacts Mg(2+). Substrate contacts are provided by residues 162–164, Arg-199, 206–208, Glu-263, Arg-291, and 297–300; these read SID, MGR, and HTQR. The active-site Proton acceptor is Asp-164. The interdomain linker stretch occupies residues 390–403; the sequence is PDHPKLLLPENKRM. The C-terminal regulatory PFK domain 2 stretch occupies residues 404-783; sequence RIGIIHVGAP…NATWSCYENA (380 aa). Residues Arg-480, 537–541, Arg-575, 582–584, Glu-642, Arg-668, 674–677, and Arg-749 each bind beta-D-fructose 2,6-bisphosphate; these read TISNN, QGG, and HFQQ.

It belongs to the phosphofructokinase type A (PFKA) family. ATP-dependent PFK group I subfamily. Eukaryotic two domain clade 'E' sub-subfamily. In terms of assembly, homotetramer. Mg(2+) is required as a cofactor.

The protein resides in the cytoplasm. The catalysed reaction is beta-D-fructose 6-phosphate + ATP = beta-D-fructose 1,6-bisphosphate + ADP + H(+). Its pathway is carbohydrate degradation; glycolysis; D-glyceraldehyde 3-phosphate and glycerone phosphate from D-glucose: step 3/4. Allosterically activated by ADP, AMP, or fructose 2,6-bisphosphate, and allosterically inhibited by ATP or citrate. Catalyzes the phosphorylation of D-fructose 6-phosphate to fructose 1,6-bisphosphate by ATP, the first committing step of glycolysis. In Aspergillus niger, this protein is ATP-dependent 6-phosphofructokinase (pfkA).